The following is a 2253-amino-acid chain: Protein Ycf2 (2253 aa).

1600 to 1607 is a binding site for ATP; the sequence is GFIGTGRS.

This sequence belongs to the Ycf2 family.

It is found in the plastid. The protein resides in the chloroplast stroma. In terms of biological role, probable ATPase of unknown function. Its presence in a non-photosynthetic plant (Epifagus virginiana) and experiments in tobacco indicate that it has an essential function which is probably not related to photosynthesis. This is Protein Ycf2 from Nymphaea alba (White water-lily).